A 210-amino-acid polypeptide reads, in one-letter code: Large ribosomal subunit protein uL3 (210 aa).

The segment at 122-155 (NQKRNNFGRGPMSHGSKNHRAPGSIGAGTTPGRV) is disordered.

The protein belongs to the universal ribosomal protein uL3 family. Part of the 50S ribosomal subunit. Forms a cluster with proteins L14 and L19.

Functionally, one of the primary rRNA binding proteins, it binds directly near the 3'-end of the 23S rRNA, where it nucleates assembly of the 50S subunit. This chain is Large ribosomal subunit protein uL3, found in Nostoc punctiforme (strain ATCC 29133 / PCC 73102).